The sequence spans 433 residues: DNA methyltransferase 1-associated protein 1 (433 aa).

The segment at 1–204 (MSADVRDILD…EVVALLAKAK (204 aa)) is required for nuclear localization. One can recognise a Myb-like domain in the interval 148 to 197 (NNWSKVQTDHLFDLARRFDLRFIVMADRWNRQQHGTKTVEELKERYYEVV). The stretch at 186–281 (VEELKERYYE…ADQQNEHASN (96 aa)) forms a coiled coil. The span at 252-264 (EARKKERERKTQD) shows a compositional bias: basic and acidic residues. Residues 252–305 (EARKKERERKTQDLQKLISQADQQNEHASNTPSTRKYEKKLHKKKVHQQPRPSR) are disordered. The span at 268 to 285 (LISQADQQNEHASNTPST) shows a compositional bias: polar residues. Residues 288–299 (YEKKLHKKKVHQ) are compositionally biased toward basic residues.

In terms of assembly, interacts with Rel. Interacts with akirin and Bap55.

It localises to the nucleus. The protein resides in the cytoplasm. Its function is as follows. Involved in transcription repression and activation. Required for larvae and pupal development, and for normal innate immune responses. Involved in modulating the activation of the immune deficiency pathway (Imd), acting either downstream of, or at the level of, the NF-kappa-B factor Rel. Possibly functions with akirin to regulate Rel, and its interaction with the Brahma complex protein Bap55 suggests that it may regulate the IMD pathway at the level of chromatin remodeling. The protein is DNA methyltransferase 1-associated protein 1 of Drosophila melanogaster (Fruit fly).